Reading from the N-terminus, the 113-residue chain is Antimicrobial peptide microplusin (113 aa).

The N-terminal stretch at 1–19 is a signal peptide; it reads MKSLLVLALLAFGAVLVSA. 3 cysteine pairs are disulfide-bonded: Cys-25–Cys-71, Cys-38–Cys-99, and Cys-60–Cys-65.

The protein localises to the secreted. Its function is as follows. Has bacteriostatic activity against Gram-positive bacteria, but not against Gram-negative bacteria. Has fungistatic activity against some but not all fungi. Binds and sequesters copper and iron ions. Copper-chelating activity is crucial for antimicrobial activity against M.luteus. The polypeptide is Antimicrobial peptide microplusin (Argas monolakensis (Mono lake bird tick)).